The primary structure comprises 181 residues: Putative manganese efflux pump MntP (181 aa).

Transmembrane regions (helical) follow at residues 5–25 (LIAL…IALG), 36–56 (MFKV…MGMV), 66–86 (GLFA…VMIV), 102–122 (IGLF…GLSL), 130–150 (ALAV…GLFI), and 158–178 (VGPY…VKLL).

It belongs to the MntP (TC 9.B.29) family.

It localises to the cell membrane. Functionally, probably functions as a manganese efflux pump. The protein is Putative manganese efflux pump MntP of Halalkalibacterium halodurans (strain ATCC BAA-125 / DSM 18197 / FERM 7344 / JCM 9153 / C-125) (Bacillus halodurans).